The following is a 386-amino-acid chain: Skeletal aspartic acid-rich protein 1 (386 aa).

The signal sequence occupies residues 1–24 (MAFVSCFHLRLLFLCLALFMAAEC). Disordered stretches follow at residues 33-145 (VDSD…PFSL) and 244-291 (EVTD…DCPH). A compositionally biased stretch (acidic residues) spans 63-107 (YDASDDNDNDNDDDDNNDNDNDNDDDNDVDRDNDNDDDDFDDSND). Basic and acidic residues-rich tracts occupy residues 133–142 (HSVESFEDRP) and 244–265 (EVTD…KDTP). Positions 266–288 (DTDSDPDDSSDNANDGDDDDDDD) are enriched in acidic residues.

In terms of tissue distribution, component of the acid-insoluble and acid-soluble organic matrix of the aragonitic skeleton (at protein level).

Its subcellular location is the secreted. The chain is Skeletal aspartic acid-rich protein 1 from Acropora millepora (Staghorn coral).